We begin with the raw amino-acid sequence, 181 residues long: Large ribosomal subunit protein eL18 (181 aa).

This sequence belongs to the eukaryotic ribosomal protein eL18 family.

Its subcellular location is the cytoplasm. The sequence is that of Large ribosomal subunit protein eL18 (rpl18) from Dictyostelium discoideum (Social amoeba).